The sequence spans 120 residues: Ragulator complex protein LAMTOR4 homolog (120 aa).

Positions 93-120 are disordered; it reads QNGVTTTTSSSSSNSVYNDASDSGAVLA. Over residues 97–107 the composition is skewed to low complexity; sequence TTTTSSSSSNS.

The protein belongs to the LAMTOR4 family. As to quaternary structure, part of the Ragulator complex composed of Lamtor3, Lamtor2, CG14184, CG14812, and Lamtor4.

The protein resides in the lysosome. Functionally, regulator of the TOR pathway, a signaling cascade that promotes cell growth in response to growth factors, energy levels, and amino acids. As part of the Ragulator complex, may activate the TOR signaling cascade in response to amino acids. The chain is Ragulator complex protein LAMTOR4 homolog from Drosophila melanogaster (Fruit fly).